The chain runs to 147 residues: Hemoglobin subunit epsilon (147 aa).

Residues 3-147 form the Globin domain; sequence HFTAEEKSVI…VATALAHKYH (145 aa). Serine 51 carries the post-translational modification Phosphoserine. 2 residues coordinate heme b: histidine 64 and histidine 93.

Belongs to the globin family. Red blood cells.

Functionally, hemoglobin epsilon chain is a beta-type chain found in early embryos. In Sus scrofa (Pig), this protein is Hemoglobin subunit epsilon (HBE1).